The primary structure comprises 239 residues: 3-dehydroquinate dehydratase (239 aa).

3-dehydroquinate contacts are provided by residues 35 to 37 and R70; that span reads ELR. The Proton donor/acceptor role is filled by H133. The active-site Schiff-base intermediate with substrate is the K160. Residues R202 and Q225 each contribute to the 3-dehydroquinate site.

The protein belongs to the type-I 3-dehydroquinase family. In terms of assembly, homodimer.

It carries out the reaction 3-dehydroquinate = 3-dehydroshikimate + H2O. The protein operates within metabolic intermediate biosynthesis; chorismate biosynthesis; chorismate from D-erythrose 4-phosphate and phosphoenolpyruvate: step 3/7. In terms of biological role, involved in the third step of the chorismate pathway, which leads to the biosynthesis of aromatic amino acids. Catalyzes the cis-dehydration of 3-dehydroquinate (DHQ) and introduces the first double bond of the aromatic ring to yield 3-dehydroshikimate. The polypeptide is 3-dehydroquinate dehydratase (Staphylococcus saprophyticus subsp. saprophyticus (strain ATCC 15305 / DSM 20229 / NCIMB 8711 / NCTC 7292 / S-41)).